Consider the following 260-residue polypeptide: Thiamine thiazole synthase (260 aa).

NAD(+)-binding positions include Ala36, 55-56, Gly63, and 154-156; these read EQ and HVD. Residues Asp156 and His171 each contribute to the Fe cation site. An NAD(+)-binding site is contributed by Met224. Arg234 contributes to the glycine binding site.

The protein belongs to the THI4 family. As to quaternary structure, homooctamer; tetramer of dimers. Requires Fe(2+) as cofactor.

It carries out the reaction hydrogen sulfide + glycine + NAD(+) = ADP-5-ethyl-4-methylthiazole-2-carboxylate + nicotinamide + 3 H2O + H(+). It participates in cofactor biosynthesis; thiamine diphosphate biosynthesis. Functionally, involved in the biosynthesis of the thiazole moiety of thiamine. Catalyzes the conversion of NAD and glycine to adenosine diphosphate 5-(2-hydroxyethyl)-4-methylthiazole-2-carboxylate (ADT), an adenylated thiazole intermediate, using free sulfide as a source of sulfur. In Methanosarcina barkeri (strain Fusaro / DSM 804), this protein is Thiamine thiazole synthase.